The following is a 113-amino-acid chain: uncharacterized protein (113 aa).

Residues 4–26 traverse the membrane as a helical segment; that stretch reads VLFKIAVALLYLLSFFLHRLHLR. The tract at residues 32–74 is disordered; sequence RRRRRRHHRRHHRRHHHHRRRRRRRRRRRRRHHRHHHHRHRRR.

It localises to the membrane. This is an uncharacterized protein from Saccharomyces cerevisiae (strain ATCC 204508 / S288c) (Baker's yeast).